The following is a 1465-amino-acid chain: DNA polymerase III PolC-type (1465 aa).

One can recognise an Exonuclease domain in the interval 425-581 (YVVFDVETTG…YDAEATGRLL (157 aa)).

This sequence belongs to the DNA polymerase type-C family. PolC subfamily.

It is found in the cytoplasm. It catalyses the reaction DNA(n) + a 2'-deoxyribonucleoside 5'-triphosphate = DNA(n+1) + diphosphate. In terms of biological role, required for replicative DNA synthesis. This DNA polymerase also exhibits 3' to 5' exonuclease activity. This chain is DNA polymerase III PolC-type, found in Streptococcus mutans serotype c (strain ATCC 700610 / UA159).